A 572-amino-acid polypeptide reads, in one-letter code: Proline--tRNA ligase (572 aa).

The protein belongs to the class-II aminoacyl-tRNA synthetase family. ProS type 1 subfamily. As to quaternary structure, homodimer.

The protein localises to the cytoplasm. The catalysed reaction is tRNA(Pro) + L-proline + ATP = L-prolyl-tRNA(Pro) + AMP + diphosphate. Catalyzes the attachment of proline to tRNA(Pro) in a two-step reaction: proline is first activated by ATP to form Pro-AMP and then transferred to the acceptor end of tRNA(Pro). As ProRS can inadvertently accommodate and process non-cognate amino acids such as alanine and cysteine, to avoid such errors it has two additional distinct editing activities against alanine. One activity is designated as 'pretransfer' editing and involves the tRNA(Pro)-independent hydrolysis of activated Ala-AMP. The other activity is designated 'posttransfer' editing and involves deacylation of mischarged Ala-tRNA(Pro). The misacylated Cys-tRNA(Pro) is not edited by ProRS. This chain is Proline--tRNA ligase, found in Klebsiella pneumoniae subsp. pneumoniae (strain ATCC 700721 / MGH 78578).